The following is a 456-amino-acid chain: Argininosuccinate lyase (456 aa).

It belongs to the lyase 1 family. Argininosuccinate lyase subfamily.

Its subcellular location is the cytoplasm. It carries out the reaction 2-(N(omega)-L-arginino)succinate = fumarate + L-arginine. It functions in the pathway amino-acid biosynthesis; L-arginine biosynthesis; L-arginine from L-ornithine and carbamoyl phosphate: step 3/3. The protein is Argininosuccinate lyase of Shewanella pealeana (strain ATCC 700345 / ANG-SQ1).